The following is a 545-amino-acid chain: Ribulokinase (545 aa).

It belongs to the ribulokinase family.

It catalyses the reaction D-ribulose + ATP = D-ribulose 5-phosphate + ADP + H(+). The catalysed reaction is L-ribulose + ATP = L-ribulose 5-phosphate + ADP + H(+). Its pathway is carbohydrate degradation; L-arabinose degradation via L-ribulose; D-xylulose 5-phosphate from L-arabinose (bacterial route): step 2/3. The polypeptide is Ribulokinase (Staphylococcus aureus (strain USA300)).